The primary structure comprises 208 residues: Large ribosomal subunit protein uL4 (208 aa).

A disordered region spans residues 50–83; that stretch reads VKTRAEVSGGGRKPWKQKGTGRARQGSIRAPQWK.

It belongs to the universal ribosomal protein uL4 family. In terms of assembly, part of the 50S ribosomal subunit.

In terms of biological role, one of the primary rRNA binding proteins, this protein initially binds near the 5'-end of the 23S rRNA. It is important during the early stages of 50S assembly. It makes multiple contacts with different domains of the 23S rRNA in the assembled 50S subunit and ribosome. Its function is as follows. Forms part of the polypeptide exit tunnel. This is Large ribosomal subunit protein uL4 from Mycoplasma capricolum subsp. capricolum (strain California kid / ATCC 27343 / NCTC 10154).